Reading from the N-terminus, the 498-residue chain is Glycerol kinase (498 aa).

Threonine 14 serves as a coordination point for ADP. Residues threonine 14 and threonine 15 each contribute to the ATP site. Sn-glycerol 3-phosphate is bound at residue threonine 14. Arginine 18 serves as a coordination point for ADP. Sn-glycerol 3-phosphate-binding residues include arginine 84, glutamate 85, tyrosine 136, and aspartate 246. Glycerol-binding residues include arginine 84, glutamate 85, tyrosine 136, aspartate 246, and glutamine 247. ADP contacts are provided by threonine 268 and glycine 311. ATP is bound by residues threonine 268, glycine 311, glutamine 315, and glycine 412. ADP-binding residues include glycine 412 and asparagine 416.

The protein belongs to the FGGY kinase family.

The catalysed reaction is glycerol + ATP = sn-glycerol 3-phosphate + ADP + H(+). Its pathway is polyol metabolism; glycerol degradation via glycerol kinase pathway; sn-glycerol 3-phosphate from glycerol: step 1/1. Its activity is regulated as follows. Inhibited by fructose 1,6-bisphosphate (FBP). In terms of biological role, key enzyme in the regulation of glycerol uptake and metabolism. Catalyzes the phosphorylation of glycerol to yield sn-glycerol 3-phosphate. In Leptospira biflexa serovar Patoc (strain Patoc 1 / Ames), this protein is Glycerol kinase.